A 217-amino-acid polypeptide reads, in one-letter code: Large ribosomal subunit protein uL3 (217 aa).

The tract at residues 127-162 (GFSRGPMSHGSKNHRAPGSTGAGTTPGRIYPGKRMA) is disordered. The segment covering 142–153 (APGSTGAGTTPG) has biased composition (low complexity).

This sequence belongs to the universal ribosomal protein uL3 family. As to quaternary structure, part of the 50S ribosomal subunit. Forms a cluster with proteins L14 and L19.

Its function is as follows. One of the primary rRNA binding proteins, it binds directly near the 3'-end of the 23S rRNA, where it nucleates assembly of the 50S subunit. This is Large ribosomal subunit protein uL3 from Prochlorococcus marinus (strain AS9601).